The chain runs to 508 residues: Adenylosuccinate synthetase 1, chloroplastic (508 aa).

The transit peptide at 1 to 56 (MNISILRLDSNPITTATSPATATANHRSGILGCYNGTYSCRLNQLQQRKKNPSIIV) directs the protein to the chloroplast. Residues 95–101 (GDEGKGK) and 123–125 (GHT) contribute to the GTP site. Asp-96 (proton acceptor) is an active-site residue. Mg(2+)-binding residues include Asp-96 and Gly-123. Residues 96–99 (DEGK), 121–124 (NAGH), Thr-213, Arg-227, Gln-307, Thr-322, and Arg-386 contribute to the IMP site. His-124 acts as the Proton donor in catalysis. 382 to 388 (TTTGRPR) serves as a coordination point for substrate. Residues Arg-388, 414–416 (KLD), and 497–499 (GIG) contribute to the GTP site.

The protein belongs to the adenylosuccinate synthetase family. In terms of assembly, homodimer. The cofactor is Mg(2+).

It is found in the plastid. It localises to the chloroplast. The catalysed reaction is IMP + L-aspartate + GTP = N(6)-(1,2-dicarboxyethyl)-AMP + GDP + phosphate + 2 H(+). It functions in the pathway purine metabolism; AMP biosynthesis via de novo pathway; AMP from IMP: step 1/2. In terms of biological role, plays an important role in the de novo pathway and in the salvage pathway of purine nucleotide biosynthesis. Catalyzes the first committed step in the biosynthesis of AMP from IMP. This is Adenylosuccinate synthetase 1, chloroplastic from Capsicum frutescens (Cayenne pepper).